Here is a 1246-residue protein sequence, read N- to C-terminus: Myosin-1 (1246 aa).

Residues 1 to 41 (MGHSRRPVGGEKKSRGFGRSKAVADVGDGRQTGGKPQVKKA) form a disordered region. A Myosin motor domain is found at 51 to 730 (IGVSDLTLLS…TLFALEAMRD (680 aa)). 144 to 151 (GESGAGKT) lines the ATP pocket. Phosphoserine is present on S372. Residues 419 to 501 (SIGILDIYGF…PGVFAALNDA (83 aa)) are actin-binding. IQ domains follow at residues 734 to 754 (HNMAIRIQRAWRNYLRYRIEC) and 755 to 780 (AIRIQRFWRRMTGGLELIKVRDQGHK). Residues 788-976 (RRRMSLLGSR…TIHTSAGEPP (189 aa)) form the TH1 domain. A compositionally biased stretch (polar residues) spans 956–970 (GSSNVDTYKSSTIHT). 2 disordered regions span residues 956–1080 (GSSN…PKKP) and 1127–1246 (WTPQ…DDEW). Pro residues-rich tracts occupy residues 1033–1045 (APQPAAVPRPVPQ) and 1065–1078 (APPPPPPVSPPAPK). The region spanning 1077–1138 (PKKPMAKVLY…PQAYLEEQKA (62 aa)) is the SH3 domain. 2 stretches are compositionally biased toward low complexity: residues 1151-1166 (TPATNGTATAAAAKAK) and 1214-1228 (NSASNASLAGGLAEA). Residues 1229–1240 (LRQRQEAMHGKQ) show a composition bias toward basic and acidic residues.

Belongs to the TRAFAC class myosin-kinesin ATPase superfamily. Myosin family. Post-translationally, phosphorylation of the TEDS site (Ser-372) is required for the polarization of the actin cytoskeleton. Phosphorylation probably activates the myosin-I ATPase activity.

Its subcellular location is the cytoplasm. It is found in the cytoskeleton. The protein localises to the actin patch. Its function is as follows. Type-I myosin implicated in the organization of the actin cytoskeleton. Required for proper actin cytoskeleton polarization. At the cell cortex, assembles in patch-like structures together with proteins from the actin-polymerizing machinery and promotes actin assembly. Functions as actin nucleation-promoting factor (NPF) for the Arp2/3 complex. Plays an important role in polarized growth, spore germination, hyphal morphogenesis, and septal wall formation. This is Myosin-1 (myoA) from Aspergillus terreus (strain NIH 2624 / FGSC A1156).